A 185-amino-acid chain; its full sequence is Guanylate kinase (185 aa).

The 179-residue stretch at 3 to 181 (TRMIIVAAPS…SYGEFKKIVE (179 aa)) folds into the Guanylate kinase-like domain. 10-17 (APSGAGKS) is an ATP binding site.

Belongs to the guanylate kinase family.

It localises to the cytoplasm. The catalysed reaction is GMP + ATP = GDP + ADP. In terms of biological role, essential for recycling GMP and indirectly, cGMP. The polypeptide is Guanylate kinase (Bdellovibrio bacteriovorus (strain ATCC 15356 / DSM 50701 / NCIMB 9529 / HD100)).